We begin with the raw amino-acid sequence, 243 residues long: Terpene cyclase janB (243 aa).

The next 7 membrane-spanning stretches (helical) occupy residues 19-39, 48-68, 77-97, 112-132, 134-154, 172-194, and 205-225; these read LADL…VGMV, YGMA…YCVF, LGVF…AIIF, LPWI…ALAA, IGPS…LSVG, LWLS…WMYW, and LVLW…VCFW.

This sequence belongs to the paxB family.

The protein localises to the membrane. It functions in the pathway secondary metabolite biosynthesis. In terms of biological role, terpene cyclase; part of the gene cluster that mediates the biosynthesis of the indole diterpenes janthitremanes such as shearinine K or shearinine A. The geranylgeranyl diphosphate (GGPP) synthase janG catalyzes the first step in janthitremane biosynthesis via conversion of farnesyl pyrophosphate and isopentyl pyrophosphate into geranylgeranyl pyrophosphate (GGPP). Condensation of indole-3-glycerol phosphate with GGPP by the prenyl transferase janC then forms 3-geranylgeranylindole (3-GGI). Epoxidation by the FAD-dependent monooxygenase janM leads to a epoxidized-GGI that is substrate of the terpene cyclase janB for cyclization to yield paspaline. Paspaline is subsequently converted to 13-desoxypaspaline by the cytochrome P450 monooxygenase janP, via beta-PC-M6 in a series of alpha-face oxidations. The cytochrome P450 monooxygenase janQ is proposed to carry out sequential beta-face oxidation steps at C-7 and C-13 of 13-desoxypaspaline to form paspalicine and paspalinine respectively. The indole diterpene prenyltransferase janD may then convert paspalinine into shearinine K which is substrate of janO and/or additional enzymes for oxidation and cyclization to generate shearinine A. The chain is Terpene cyclase janB from Penicillium janthinellum (Penicillium vitale).